Reading from the N-terminus, the 319-residue chain is Homeobox protein Hox-B5a (319 aa).

The tract at residues 114 to 224 (SLLSPGSGDT…NTVGSEGQPP (111 aa)) is disordered. Residues 128-155 (RSSSPRSEQSGSGNLSSTNLSSSTNISS) are compositionally biased toward low complexity. An Antp-type hexapeptide motif is present at residues 226–231 (IFPWMR). Residues 244–303 (GKRARTAYTRYQTLELEKEFHFNRYLTRRRRIEIAHALCLTERQIKIWFQNRRMKWKKDN) constitute a DNA-binding region (homeobox).

This sequence belongs to the Antp homeobox family.

The protein resides in the nucleus. Its function is as follows. Sequence-specific transcription factor which is part of a developmental regulatory system that provides cells with specific positional identities on the anterior-posterior axis. This is Homeobox protein Hox-B5a (hoxb5a) from Takifugu rubripes (Japanese pufferfish).